The chain runs to 100 residues: Small ribosomal subunit protein uS14c (100 aa).

This sequence belongs to the universal ribosomal protein uS14 family. Part of the 30S ribosomal subunit.

The protein localises to the plastid. Its subcellular location is the chloroplast. Its function is as follows. Binds 16S rRNA, required for the assembly of 30S particles. The chain is Small ribosomal subunit protein uS14c from Coffea arabica (Arabian coffee).